Consider the following 101-residue polypeptide: NAD(P)H-quinone oxidoreductase subunit 4L, chloroplastic (101 aa).

A run of 3 helical transmembrane segments spans residues 2–22, 32–52, and 61–81; these read IFQSYLLIAASMFCIGLYGLL, MSLELLLNAVNLNLLTFSNFV, and VLALFVIALAAAEAAIGLAII.

This sequence belongs to the complex I subunit 4L family. NDH is composed of at least 16 different subunits, 5 of which are encoded in the nucleus.

It localises to the plastid. The protein localises to the chloroplast thylakoid membrane. The catalysed reaction is a plastoquinone + NADH + (n+1) H(+)(in) = a plastoquinol + NAD(+) + n H(+)(out). It carries out the reaction a plastoquinone + NADPH + (n+1) H(+)(in) = a plastoquinol + NADP(+) + n H(+)(out). NDH shuttles electrons from NAD(P)H:plastoquinone, via FMN and iron-sulfur (Fe-S) centers, to quinones in the photosynthetic chain and possibly in a chloroplast respiratory chain. The immediate electron acceptor for the enzyme in this species is believed to be plastoquinone. Couples the redox reaction to proton translocation, and thus conserves the redox energy in a proton gradient. This is NAD(P)H-quinone oxidoreductase subunit 4L, chloroplastic from Nephroselmis olivacea (Green alga).